Reading from the N-terminus, the 476-residue chain is Proline--tRNA ligase (476 aa).

This sequence belongs to the class-II aminoacyl-tRNA synthetase family. ProS type 3 subfamily. As to quaternary structure, homodimer.

The protein resides in the cytoplasm. It carries out the reaction tRNA(Pro) + L-proline + ATP = L-prolyl-tRNA(Pro) + AMP + diphosphate. In terms of biological role, catalyzes the attachment of proline to tRNA(Pro) in a two-step reaction: proline is first activated by ATP to form Pro-AMP and then transferred to the acceptor end of tRNA(Pro). In Rubrobacter xylanophilus (strain DSM 9941 / JCM 11954 / NBRC 16129 / PRD-1), this protein is Proline--tRNA ligase.